The sequence spans 425 residues: Protein PTI1 (425 aa).

Ser-272 is subject to Phosphoserine.

As to quaternary structure, component of the cleavage and polyadenylation factor (CPF) complex, which is composed of PTI1, SYC1, SSU72, GLC7, MPE1, REF2, PFS2, PTA1, YSH1/BRR5, SWD2, CFT2/YDH1, YTH1, CFT1/YHH1, FIP1 and PAP1. Component of the APT complex, which is a subcomplex of CPF, and is composed of PTI1, SYC1, SSU72, GLC7, REF2, PTA1 and SWD2.

Its subcellular location is the nucleus. Component of the cleavage and polyadenylation factor (CPF) complex, which plays a key role in polyadenylation-dependent pre-mRNA 3'-end formation and cooperates with cleavage factors including the CFIA complex and NAB4/CFIB. Component of the APT complex, which may be involved in polyadenylation-independent transcript 3'-end formation. PTI1 is required for 3'-end formation of snoRNAs. This is Protein PTI1 (PTI1) from Saccharomyces cerevisiae (strain ATCC 204508 / S288c) (Baker's yeast).